We begin with the raw amino-acid sequence, 614 residues long: UPF0329 protein ECU03_0090 (614 aa).

Composition is skewed to basic and acidic residues over residues 317–338 (EREE…EESL) and 345–354 (LRMEEKEKSK). Positions 317–420 (EREEAEKMRG…KKSRSKGHRY (104 aa)) are disordered. The segment covering 355-364 (SRGKKKKGGK) has biased composition (basic residues). Basic and acidic residues predominate over residues 372-381 (AKMEEEKKDS). Positions 382–394 (EEVEESAEAEVSL) are enriched in acidic residues. A compositionally biased stretch (basic residues) spans 408-420 (SSKKKSRSKGHRY).

The protein belongs to the UPF0329 family.

The chain is UPF0329 protein ECU03_0090 from Encephalitozoon cuniculi (strain GB-M1) (Microsporidian parasite).